Consider the following 108-residue polypeptide: Large ribosomal subunit protein P1 (108 aa).

The segment at 67–108 (PAAAPAEAGGEEKKEEEKKEEEEKEEEVSEEEALAGLSALFG) is disordered. A compositionally biased stretch (acidic residues) spans 84 to 99 (KKEEEEKEEEVSEEEA).

Belongs to the eukaryotic ribosomal protein P1/P2 family. In terms of assembly, part of the 50S ribosomal subunit. Homodimer, it forms part of the ribosomal stalk which helps the ribosome interact with GTP-bound translation factors. Forms a heptameric uL10/P0(P1)2(P1)2(P1)2 complex, where uL10/P0 forms an elongated spine to which the P1 dimers bind in a sequential fashion.

Forms part of the ribosomal stalk, playing a central role in the interaction of the ribosome with GTP-bound translation factors. The stalk complex of P.horikoshii binds to E.coli large subunits and confers on them the ability to interact with eukaryotic elongation factors. Each succesive P1 dimer bound along the P0 spine increases the GTPase activity of elongation factors and increases translation by reconsituted ribosomes. The protein is Large ribosomal subunit protein P1 of Pyrococcus horikoshii (strain ATCC 700860 / DSM 12428 / JCM 9974 / NBRC 100139 / OT-3).